Consider the following 168-residue polypeptide: Mitochondrial inner membrane protein Mpv17 (168 aa).

4 helical membrane passes run 12–29, 41–61, 82–101, and 144–166; these read INVA…QFFF, RTLR…RRWY, MLVD…SFLV, and LGYQ…SMIL.

The protein belongs to the peroxisomal membrane protein PXMP2/4 family. Part of a larger complex that may be a homohexamer.

The protein resides in the mitochondrion inner membrane. Functionally, non-selective channel that modulates the membrane potential under normal conditions and oxidative stress, and is involved in mitochondrial homeostasis. Can translocate uridine, but not orotate, across a lipid membrane. Involved in maintenance of mitochondrial ultrastructure. May be involved in mitochondrial DNA (mtDNA) maintenance but does not appear to be directly involved in mitochondrial deoxynucleoside triphosphate (dNTP) pool homeostasis. May be involved in the regulation of reactive oxygen species metabolism and the control of oxidative phosphorylation. This chain is Mitochondrial inner membrane protein Mpv17, found in Drosophila melanogaster (Fruit fly).